A 403-amino-acid polypeptide reads, in one-letter code: tRNA(Met) cytidine acetate ligase (403 aa).

Residues valine 7–histidine 20, glycine 101, asparagine 164, and arginine 189–isoleucine 190 each bind ATP.

Belongs to the TmcAL family.

The protein resides in the cytoplasm. It catalyses the reaction cytidine(34) in elongator tRNA(Met) + acetate + ATP = N(4)-acetylcytidine(34) in elongator tRNA(Met) + AMP + diphosphate. Functionally, catalyzes the formation of N(4)-acetylcytidine (ac(4)C) at the wobble position of elongator tRNA(Met), using acetate and ATP as substrates. First activates an acetate ion to form acetyladenylate (Ac-AMP) and then transfers the acetyl group to tRNA to form ac(4)C34. The chain is tRNA(Met) cytidine acetate ligase from Lysinibacillus sphaericus (strain C3-41).